A 1065-amino-acid chain; its full sequence is WD repeat-containing protein on Y chromosome (1065 aa).

8 WD repeats span residues 153-197, 326-365, 369-408, 459-498, 511-550, 598-638, 745-784, and 828-867; these read EEVT…IRTA, RVPL…EPSA, GHNG…LLQT, THAA…RKII, IIDI…VVRN, FHTD…RRYS, KTGD…VPEA, and AHLK…LGTL. The span at 915–925 shows a compositional bias: basic and acidic residues; sequence PAKRAEVKAPE. 2 disordered regions span residues 915-936 and 1024-1065; these read PAKR…QTDD and GSAL…QQSE. Over residues 926–936 the composition is skewed to acidic residues; that stretch reads DRDEETAQTDD.

The chain is WD repeat-containing protein on Y chromosome from Drosophila persimilis (Fruit fly).